The following is a 265-amino-acid chain: Undecaprenyl-diphosphatase (265 aa).

8 consecutive transmembrane segments (helical) span residues 15-37 (GLTE…LLEY), 41-61 (KAES…VFLY), 85-105 (YLLA…HSFI), 109-129 (LFGP…ILAV), 144-164 (VSPA…WPGF), 183-203 (LAAE…TGYD), 218-238 (FWAV…KGFI), and 244-264 (VTFR…LLFW).

This sequence belongs to the UppP family.

It is found in the cell inner membrane. The catalysed reaction is di-trans,octa-cis-undecaprenyl diphosphate + H2O = di-trans,octa-cis-undecaprenyl phosphate + phosphate + H(+). Functionally, catalyzes the dephosphorylation of undecaprenyl diphosphate (UPP). Confers resistance to bacitracin. The chain is Undecaprenyl-diphosphatase from Oleidesulfovibrio alaskensis (strain ATCC BAA-1058 / DSM 17464 / G20) (Desulfovibrio alaskensis).